The sequence spans 520 residues: GMP synthase [glutamine-hydrolyzing] (520 aa).

The Glutamine amidotransferase type-1 domain occupies 8-202; it reads RLLIIDFGSQ…FVRLAGFSGD (195 aa). Cys86 acts as the Nucleophile in catalysis. Catalysis depends on residues His177 and Glu179. Residues 203–395 form the GMPS ATP-PPase domain; sequence WTMGAYREQM…LGLPDSFIGR (193 aa). 230–236 provides a ligand contact to ATP; that stretch reads SGGVDSS.

Homodimer.

It catalyses the reaction XMP + L-glutamine + ATP + H2O = GMP + L-glutamate + AMP + diphosphate + 2 H(+). Its pathway is purine metabolism; GMP biosynthesis; GMP from XMP (L-Gln route): step 1/1. Catalyzes the synthesis of GMP from XMP. In Ruegeria sp. (strain TM1040) (Silicibacter sp.), this protein is GMP synthase [glutamine-hydrolyzing].